A 118-amino-acid polypeptide reads, in one-letter code: Large ribosomal subunit protein bL20 (118 aa).

It belongs to the bacterial ribosomal protein bL20 family.

In terms of biological role, binds directly to 23S ribosomal RNA and is necessary for the in vitro assembly process of the 50S ribosomal subunit. It is not involved in the protein synthesizing functions of that subunit. This is Large ribosomal subunit protein bL20 from Ralstonia pickettii (strain 12J).